The sequence spans 224 residues: C-reactive protein (224 aa).

The signal sequence occupies residues 1–18 (MEKLLCFLVLTSLSHAFG). Q19 bears the Pyrrolidone carboxylic acid mark. One can recognise a Pentraxin (PTX) domain in the interval 23–224 (SRKAFVFPKE…EVFTKPQLWP (202 aa)). C54 and C115 are joined by a disulfide. Ca(2+) is bound by residues D78, N79, E156, Q157, D158, and Q168.

This sequence belongs to the pentraxin family. As to quaternary structure, homopentamer. Pentraxin (or pentaxin) have a discoid arrangement of 5 non-covalently bound subunits. Interacts with FCN1; may regulate monocyte activation by FCN1. Ca(2+) is required as a cofactor. Found in plasma.

It localises to the secreted. Functionally, displays several functions associated with host defense: it promotes agglutination, bacterial capsular swelling, phagocytosis and complement fixation through its calcium-dependent binding to phosphorylcholine. Can interact with DNA and histones and may scavenge nuclear material released from damaged circulating cells. The protein is C-reactive protein (CRP) of Homo sapiens (Human).